The sequence spans 77 residues: Omega-conotoxin TxVII (77 aa).

The first 22 residues, 1 to 22 (MKLTCMMIVAVLFLTAWTFATA), serve as a signal peptide directing secretion. The propeptide occupies 23–49 (DDSGNGLENLFPKAHHEMKNPEASKLN). Cystine bridges form between C52–C67, C59–C71, and C66–C75.

Expressed by the venom duct.

It localises to the secreted. In terms of biological role, omega-conotoxins act at presynaptic membranes, they bind and block voltage-gated calcium channels (Cav). Specifically acts on L-type channels. It blocks molluscan dihydropyridine-sensitive calcium channels. The sequence is that of Omega-conotoxin TxVII from Conus textile (Cloth-of-gold cone).